A 181-amino-acid chain; its full sequence is Ribosome maturation factor RimP (181 aa).

This sequence belongs to the RimP family.

The protein localises to the cytoplasm. In terms of biological role, required for maturation of 30S ribosomal subunits. This chain is Ribosome maturation factor RimP, found in Mycolicibacterium smegmatis (strain ATCC 700084 / mc(2)155) (Mycobacterium smegmatis).